The sequence spans 363 residues: 3-isopropylmalate dehydrogenase (363 aa).

Residue 78-91 (GPKWEHLPPDQQPE) coordinates NAD(+). Arg99, Arg109, Arg138, and Asp227 together coordinate substrate. Asp227, Asp251, and Asp255 together coordinate Mg(2+). 285–297 (GSAPDIAGKNIAN) is a binding site for NAD(+).

It belongs to the isocitrate and isopropylmalate dehydrogenases family. LeuB type 1 subfamily. Homodimer. Requires Mg(2+) as cofactor. It depends on Mn(2+) as a cofactor.

The protein localises to the cytoplasm. It catalyses the reaction (2R,3S)-3-isopropylmalate + NAD(+) = 4-methyl-2-oxopentanoate + CO2 + NADH. The protein operates within amino-acid biosynthesis; L-leucine biosynthesis; L-leucine from 3-methyl-2-oxobutanoate: step 3/4. In terms of biological role, catalyzes the oxidation of 3-carboxy-2-hydroxy-4-methylpentanoate (3-isopropylmalate) to 3-carboxy-4-methyl-2-oxopentanoate. The product decarboxylates to 4-methyl-2 oxopentanoate. This is 3-isopropylmalate dehydrogenase from Escherichia coli O157:H7.